We begin with the raw amino-acid sequence, 420 residues long: Histidine--tRNA ligase (420 aa).

Belongs to the class-II aminoacyl-tRNA synthetase family. Homodimer.

The protein resides in the cytoplasm. The catalysed reaction is tRNA(His) + L-histidine + ATP = L-histidyl-tRNA(His) + AMP + diphosphate + H(+). The protein is Histidine--tRNA ligase of Staphylococcus aureus (strain Mu3 / ATCC 700698).